The chain runs to 492 residues: Glutamyl-tRNA(Gln) amidotransferase subunit B, mitochondrial (492 aa).

This sequence belongs to the GatB/GatE family. GatB subfamily. As to quaternary structure, subunit of the heterotrimeric GatFAB amidotransferase (AdT) complex, composed of A, B and F subunits.

The protein localises to the mitochondrion. It catalyses the reaction L-glutamyl-tRNA(Gln) + L-glutamine + ATP + H2O = L-glutaminyl-tRNA(Gln) + L-glutamate + ADP + phosphate + H(+). In terms of biological role, allows the formation of correctly charged Gln-tRNA(Gln) through the transamidation of misacylated Glu-tRNA(Gln) in the mitochondria. The reaction takes place in the presence of glutamine and ATP through an activated gamma-phospho-Glu-tRNA(Gln). The sequence is that of Glutamyl-tRNA(Gln) amidotransferase subunit B, mitochondrial from Komagataella phaffii (strain GS115 / ATCC 20864) (Yeast).